Here is an 87-residue protein sequence, read N- to C-terminus: Small ribosomal subunit protein uS15 (87 aa).

Residues 1 to 22 (MSEINKAEIVASNARAPSDTGS) are disordered.

Belongs to the universal ribosomal protein uS15 family. Part of the 30S ribosomal subunit. Forms a bridge to the 50S subunit in the 70S ribosome, contacting the 23S rRNA.

In terms of biological role, one of the primary rRNA binding proteins, it binds directly to 16S rRNA where it helps nucleate assembly of the platform of the 30S subunit by binding and bridging several RNA helices of the 16S rRNA. Its function is as follows. Forms an intersubunit bridge (bridge B4) with the 23S rRNA of the 50S subunit in the ribosome. This is Small ribosomal subunit protein uS15 from Leptothrix cholodnii (strain ATCC 51168 / LMG 8142 / SP-6) (Leptothrix discophora (strain SP-6)).